The primary structure comprises 185 residues: MAGKLTLIVGPMYSGKTTELLSYVEIYRLGRKKTIVFKPSLDNRYGVDCVKTHAGVEVEAIAVEKSADAMKYIKQPVDAVFVDEVQFFDKDLVKIVRQLLDQDVDIFCAGLDMTFKQNPFETTMLLMSLANEIIKKKAVCHICGEYNATLTYKFVQDDSEIDIGGKEKYIAVCRDCYNKVASKND.

ATP is bound by residues 10–17 (GPMYSGKT) and 83–86 (DEVQ). Residue E84 is the Proton acceptor of the active site. C140, C143, C173, and C176 together coordinate Zn(2+).

This sequence belongs to the thymidine kinase family. In terms of assembly, homotetramer.

The protein resides in the cytoplasm. It catalyses the reaction thymidine + ATP = dTMP + ADP + H(+). The polypeptide is Thymidine kinase (Pseudothermotoga lettingae (strain ATCC BAA-301 / DSM 14385 / NBRC 107922 / TMO) (Thermotoga lettingae)).